Consider the following 367-residue polypeptide: 2-oxoisovalerate dehydrogenase subunit alpha (367 aa).

Substrate is bound by residues phenylalanine 66, tyrosine 95, 128–131 (MPEH), and serine 144. 94-96 (YYR) is a binding site for thiamine diphosphate. Thiamine diphosphate-binding positions include 144-146 (SPI), 174-180 (GDGATSE), 204-208 (NFYAI), and histidine 273. The Mg(2+) site is built by aspartate 175, asparagine 204, and tyrosine 206.

It belongs to the BCKDHA family. Heterotetramer of two alpha and two beta chains. Directly associated with ODBB in the E1 complex. Thiamine diphosphate is required as a cofactor.

The enzyme catalyses N(6)-[(R)-lipoyl]-L-lysyl-[protein] + 3-methyl-2-oxobutanoate + H(+) = N(6)-[(R)-S(8)-2-methylpropanoyldihydrolipoyl]-L-lysyl-[protein] + CO2. The branched-chain alpha-keto dehydrogenase complex catalyzes the overall conversion of alpha-keto acids to acyl-CoA and CO(2). It contains multiple copies of three enzymatic components: branched-chain alpha-keto acid decarboxylase (E1), lipoamide acyltransferase (E2) and lipoamide dehydrogenase (E3). The sequence is that of 2-oxoisovalerate dehydrogenase subunit alpha from Thermus thermophilus (strain ATCC BAA-163 / DSM 7039 / HB27).